Consider the following 488-residue polypeptide: Tripartite motif-containing protein 6 (488 aa).

The segment at 15–60 adopts an RING-type zinc-finger fold; that stretch reads CPICLELLTEPLSIDCGHSFCQVCIIGNSNNSVFGQGGRSSCPVCR. The B box-type zinc-finger motif lies at 92-133; it reads LEVIFCALHGEKLQLFCKEDGKLICWLCERSQEHRGHHTFLM. Residues C97, H100, C119, and H125 each coordinate Zn(2+). A coiled-coil region spans residues 132 to 223; sequence LMEEVAQEYQ…SIIEKAEGDL (92 aa). The B30.2/SPRY domain maps to 282-488; it reads DLRKMLKVFR…VPMTLRRPTS (207 aa).

The protein belongs to the TRIM/RBCC family. As to quaternary structure, homotrimer. Forms heteromultimers (via B30.2/SPRY domain) with TRIM5. Interacts with MYC. Interacts (via SPRY domain) with IKBKE. Interacts with VAMP8; this interaction contributes to the activation of the type I interferon antiviral response. Interacts with DHX16.

The protein resides in the cytoplasm. It carries out the reaction S-ubiquitinyl-[E2 ubiquitin-conjugating enzyme]-L-cysteine + [acceptor protein]-L-lysine = [E2 ubiquitin-conjugating enzyme]-L-cysteine + N(6)-ubiquitinyl-[acceptor protein]-L-lysine.. The protein operates within protein modification; protein ubiquitination. Functionally, E3 ubiquitin ligase that plays a crucial role in the activation of the IKBKE-dependent branch of the type I interferon signaling pathway. In concert with the ubiquitin-conjugating E2 enzyme UBE2K, synthesizes unanchored 'Lys-48'-linked polyubiquitin chains that promote the oligomerization and autophosphorylation of IKBKE leading to stimulation of an antiviral response. Also ubiquitinates MYC and inhibits its transcription activation activity, maintaining the pluripotency of embryonic stem cells. Promotes the association of unanchored 'Lys-48'-polyubiquitin chains with DHX16 leading to enhancement of RIGI-mediated innate antiviral immune response. The chain is Tripartite motif-containing protein 6 (Trim6) from Mus musculus (Mouse).